Here is a 744-residue protein sequence, read N- to C-terminus: Zinc finger protein 366 (744 aa).

Residues 206-228 (KQPPEPLLPRKAEPQESEETKQK) are disordered. Residues 213–228 (LPRKAEPQESEETKQK) are compositionally biased toward basic and acidic residues. 11 C2H2-type zinc fingers span residues 253–275 (WQCP…ILGH), 281–303 (HACT…MLTH), 309–331 (HKCQ…MMQH), 337–359 (HNCR…EAKH), 365–387 (NICV…LTTH), 393–415 (YNCS…MMKH), 421–443 (YICS…SLTH), 449–471 (HKCG…VLIH), 477–499 (YQCH…MIVH), 505–527 (FKCK…MHLH), and 533–556 (FKCL…KVKH). The tract at residues 455–744 (GREFTLLANM…MEKQAVLLGI (290 aa)) is interaction with NRIP1. Residues 590 to 594 (PFDLS) carry the PXDLS motif. Disordered stretches follow at residues 603–627 (VFQS…NCYE) and 664–692 (KEEK…QERD).

In terms of assembly, interacts with ESR1 and NRIP1. Interacts (via PXDLS motif) with CTBP1. Expressed in immature and mature dendritic cells (DCs). Not detected in other blood cell types.

It is found in the nucleus. Functionally, has transcriptional repression activity. Acts as a corepressor of ESR1; the function seems to involve CTBP1 and histone deacetylases. The chain is Zinc finger protein 366 from Homo sapiens (Human).